The chain runs to 461 residues: Ufm1-specific protease 2 (461 aa).

Residues C294, D418, and H420 contribute to the active site.

It belongs to the peptidase C78 family. Expressed at high level in brain, kidney, stomach, skeletal muscle, liver, pancreas, spleen and testis.

Its subcellular location is the endoplasmic reticulum. The protein resides in the cytoplasm. The protein localises to the nucleus. In terms of biological role, thiol-dependent isopeptidase that specifically cleaves UFM1, a ubiquitin-like modifier protein, from conjugated proteins, such as CD274/PD-L1, CYB5R3, DDRGK1, MRE11, RPL26/uL24, TRIP4 and RPL26/uL24. While it is also able to mediate the processing of UFM1 precursors, a prerequisite for conjugation reactions, UFSP2 mainly acts as a protein deUFMylase that mediates deconjugation of UFM1 from target proteins. Mediates deUFMylation of RPL26/uL24, a critical step to release the UFM1 ribosome E3 ligase (UREL) complex during the recycling of 60S ribosome subunits from the endoplasmic reticulum. Catalyzes deUFMylation of TRIP4, regulating intracellular nuclear receptors transactivation and thereby regulate cell proliferation and differentiation. The sequence is that of Ufm1-specific protease 2 from Mus musculus (Mouse).